Consider the following 212-residue polypeptide: MAKQYDVLFRLLLIGDSGVGKTCLLCRFTDNEFHSSHISTIGVDFKMKTIEVDGIKVRIQIWDTAGQERYQTITKQYYRRAQGIFLVYDISSERSYQHIMKWVSDVDEYAPEGVQKILIGNKADEEQKRQVGREQGQQLAKEYGMDFYETSACTNLNIKESFTRLTELVLQAHRKELEGLRMRASNELALAELEEEEGKPEGPANSSKTCWC.

S17, G18, V19, G20, K21, T22, C23, S35, S39, and T40 together coordinate GTP. Residue T22 participates in Mg(2+) binding. 2 short sequence motifs (switch) span residues 31 to 45 and 63 to 80; these read NEFH…GVDF and DTAG…YYRR. 2 residues coordinate Mg(2+): T40 and D63. The GTP site is built by G66, N121, K122, D124, S151, and A152. The interval 193–212 is disordered; that stretch reads LEEEEGKPEGPANSSKTCWC. S-geranylgeranyl cysteine attachment occurs at residues C210 and C212. C212 is modified (cysteine methyl ester).

It belongs to the small GTPase superfamily. Rab family. The GTP bound form of RAB15 interacts with REP15. Interacts (GTP-bound form) with MICAL1, MICAL3, MICALCL, EHBP1 and EHBP1L1. Mg(2+) serves as cofactor.

It is found in the cell membrane. The catalysed reaction is GTP + H2O = GDP + phosphate + H(+). Regulated by guanine nucleotide exchange factors (GEFs) which promote the exchange of bound GDP for free GTP. Regulated by GTPase activating proteins (GAPs) which increase the GTP hydrolysis activity. Inhibited by GDP dissociation inhibitors (GDIs). The small GTPases Rab are key regulators of intracellular membrane trafficking, from the formation of transport vesicles to their fusion with membranes. Rabs cycle between an inactive GDP-bound form and an active GTP-bound form that is able to recruit to membranes different sets of downstream effectors directly responsible for vesicle formation, movement, tethering and fusion. RAB15 may act in concert with RAB3A in regulating aspects of synaptic vesicle membrane flow within the nerve terminal. In Homo sapiens (Human), this protein is Ras-related protein Rab-15.